A 128-amino-acid chain; its full sequence is Ribonuclease P protein component (128 aa).

Belongs to the RnpA family. As to quaternary structure, consists of a catalytic RNA component (M1 or rnpB) and a protein subunit.

It catalyses the reaction Endonucleolytic cleavage of RNA, removing 5'-extranucleotides from tRNA precursor.. In terms of biological role, RNaseP catalyzes the removal of the 5'-leader sequence from pre-tRNA to produce the mature 5'-terminus. It can also cleave other RNA substrates such as 4.5S RNA. The protein component plays an auxiliary but essential role in vivo by binding to the 5'-leader sequence and broadening the substrate specificity of the ribozyme. The protein is Ribonuclease P protein component of Prochlorococcus marinus (strain MIT 9313).